We begin with the raw amino-acid sequence, 209 residues long: Urease accessory protein UreG (209 aa).

GTP is bound at residue 10–17 (GPVGSGKT).

The protein belongs to the SIMIBI class G3E GTPase family. UreG subfamily. In terms of assembly, homodimer. UreD, UreF and UreG form a complex that acts as a GTP-hydrolysis-dependent molecular chaperone, activating the urease apoprotein by helping to assemble the nickel containing metallocenter of UreC. The UreE protein probably delivers the nickel.

The protein localises to the cytoplasm. Its function is as follows. Facilitates the functional incorporation of the urease nickel metallocenter. This process requires GTP hydrolysis, probably effectuated by UreG. The polypeptide is Urease accessory protein UreG (Lysinibacillus sphaericus (strain C3-41)).